Consider the following 144-residue polypeptide: Bacilliredoxin SH1478 (144 aa).

This sequence belongs to the bacilliredoxin family.

This Staphylococcus haemolyticus (strain JCSC1435) protein is Bacilliredoxin SH1478.